We begin with the raw amino-acid sequence, 230 residues long: Pyridoxine/pyridoxamine 5'-phosphate oxidase (230 aa).

Residues 21–24 (RVEY) and lysine 87 each bind substrate. FMN-binding positions include 82–87 (RSVLCK), 97–98 (YT), lysine 104, and glutamine 126. Residues tyrosine 144, arginine 148, and serine 152 each coordinate substrate. Residues 161–162 (QS) and tryptophan 207 each bind FMN. 213 to 215 (RVH) is a substrate binding site. FMN is bound at residue arginine 217.

It belongs to the pyridoxamine 5'-phosphate oxidase family. Homodimer. FMN serves as cofactor.

It catalyses the reaction pyridoxamine 5'-phosphate + O2 + H2O = pyridoxal 5'-phosphate + H2O2 + NH4(+). The enzyme catalyses pyridoxine 5'-phosphate + O2 = pyridoxal 5'-phosphate + H2O2. It functions in the pathway cofactor metabolism; pyridoxal 5'-phosphate salvage; pyridoxal 5'-phosphate from pyridoxamine 5'-phosphate: step 1/1. It participates in cofactor metabolism; pyridoxal 5'-phosphate salvage; pyridoxal 5'-phosphate from pyridoxine 5'-phosphate: step 1/1. Functionally, catalyzes the oxidation of either pyridoxine 5'-phosphate (PNP) or pyridoxamine 5'-phosphate (PMP) into pyridoxal 5'-phosphate (PLP). In Mycolicibacterium smegmatis (strain ATCC 700084 / mc(2)155) (Mycobacterium smegmatis), this protein is Pyridoxine/pyridoxamine 5'-phosphate oxidase.